Reading from the N-terminus, the 118-residue chain is uncharacterized protein (118 aa).

The signal sequence occupies residues 1-26 (MTKLKMLSMLTVMIASLFIFSSQALA). One can recognise an SH3b domain in the interval 30–104 (FTVSTSSGAP…VNIGYVSDTY (75 aa)).

The protein to B.subtilis YraI.

This is an uncharacterized protein from Bacillus subtilis (strain 168).